The chain runs to 338 residues: Arginine N-succinyltransferase subunit alpha (338 aa).

The protein belongs to the succinylarginine dihydrolase family. Heterotetramer of two alpha and two beta subunits.

It carries out the reaction succinyl-CoA + L-arginine = N(2)-succinyl-L-arginine + CoA + H(+). The protein operates within amino-acid degradation; L-arginine degradation via AST pathway; L-glutamate and succinate from L-arginine: step 1/5. Catalyzes the transfer of succinyl-CoA to arginine to produce N(2)-succinylarginine. Also acts on L-ornithine. This chain is Arginine N-succinyltransferase subunit alpha (astA), found in Pseudomonas aeruginosa (strain ATCC 15692 / DSM 22644 / CIP 104116 / JCM 14847 / LMG 12228 / 1C / PRS 101 / PAO1).